Here is a 185-residue protein sequence, read N- to C-terminus: Translation initiation factor IF-3 (185 aa).

It belongs to the IF-3 family. In terms of assembly, monomer.

It is found in the cytoplasm. Its function is as follows. IF-3 binds to the 30S ribosomal subunit and shifts the equilibrium between 70S ribosomes and their 50S and 30S subunits in favor of the free subunits, thus enhancing the availability of 30S subunits on which protein synthesis initiation begins. This Rickettsia prowazekii (strain Madrid E) protein is Translation initiation factor IF-3.